The following is a 5207-amino-acid chain: NBPF family member NBPF20 (5207 aa).

Olduvai domains are found at residues 5–77 (SREL…PSCP), 80–135 (SREL…LDVD), 136–228 (RTKK…RSKK), 229–321 (ERRR…PSCP), 324–379 (SREL…LDVD), 380–472 (RTKK…RSKK), 473–565 (ERRR…PSCP), 568–623 (SREL…LDVD), 624–716 (RTKK…RSKK), 717–809 (ERRR…PSCP), 812–867 (SREL…LDVD), 868–960 (RTKK…RSKK), 961–1053 (ERRR…PSCP), 1056–1111 (SREL…LDVD), 1112–1204 (RTKK…RSKK), 1205–1297 (ERRR…PSCP), 1300–1355 (SREL…LDVD), 1356–1448 (RTKK…RSKK), 1449–1541 (ERRR…PSCP), 1544–1599 (SREL…LDVD), 1600–1692 (RTKK…RSKK), 1693–1785 (ERRR…PSCP), 1788–1843 (SREL…LDVD), 1844–1936 (RTKK…RSKK), 1937–2029 (ERRR…PSCP), 2032–2087 (SREL…LDVD), 2088–2180 (RTKK…RSKK), 2181–2273 (ERRR…PSCP), 2276–2331 (SREL…LDVD), 2332–2424 (RTKK…RSKK), 2425–2517 (ERRR…PSCP), 2520–2575 (SREL…LDVD), 2576–2668 (RTKK…RSKK), 2669–2761 (ERRR…PSCP), 2764–2819 (SREL…LDVD), 2820–2912 (RTKK…RSKK), 2913–3005 (ERRR…PSCP), 3008–3063 (SREL…LDVD), 3064–3156 (RTKK…RSKK), 3157–3249 (ERRR…PSCP), 3252–3307 (SREL…LDVD), 3308–3400 (RTKK…RSKK), 3401–3493 (ERRR…PSCP), 3496–3551 (SREL…LDVD), 3552–3644 (RTKK…RSKK), 3645–3737 (ERRR…PSCP), 3740–3795 (SREL…LDVD), 3796–3888 (RTKK…RSKK), 3889–3981 (ERRR…PSCP), 3984–4039 (SREL…LDVD), 4040–4132 (RTKK…RSKK), 4133–4225 (ERRR…PSCP), 4228–4283 (SREL…LDVD), 4284–4376 (RTKK…RSKK), 4377–4452 (ERRR…LDVD), 4453–4545 (RTKK…RSKK), 4546–4621 (ERRR…LDVD), 4622–4713 (RTKK…PSCP), 4716–4771 (SREL…LDVD), 4772–4864 (RTKK…RSKK), 4865–4957 (ERRR…PSCP), 4960–5015 (SREL…LDVD), 5016–5108 (RTKK…RSKK), and 5109–5207 (KRRR…IFPQ). 2 disordered regions span residues 137–157 (TKKD…LSRE) and 215–256 (KGKG…LDEK). A compositionally biased stretch (basic residues) spans 216–234 (GKGKKRRGRRSKKERRRGR). Disordered regions lie at residues 381–403 (TKKD…RELL) and 459–513 (KGKG…DRSY). Residues 460–478 (GKGKKRRGRRSKKERRRGR) are compositionally biased toward basic residues. Over residues 492-502 (LSRELLDEKGP) the composition is skewed to basic and acidic residues. Disordered stretches follow at residues 625 to 647 (TKKD…RELL) and 703 to 744 (KGKG…LDEK). Basic residues predominate over residues 704–722 (GKGKKRRGRRSKKERRRGR). Disordered stretches follow at residues 869–891 (TKKD…RELL) and 947–1001 (KGKG…DRSY). Positions 948-966 (GKGKKRRGRRSKKERRRGR) are enriched in basic residues. The span at 980–990 (LSRELLDEKGP) shows a compositional bias: basic and acidic residues. 2 disordered regions span residues 1113 to 1135 (TKKD…RELL) and 1191 to 1245 (KGKG…DRSY). Over residues 1192–1210 (GKGKKRRGRRSKKERRRGR) the composition is skewed to basic residues. Positions 1224-1234 (LSRELLDEKGP) are enriched in basic and acidic residues. 2 disordered regions span residues 1357 to 1379 (TKKD…RELL) and 1435 to 1489 (KGKG…DRSY). Basic residues predominate over residues 1436–1454 (GKGKKRRGRRSKKERRRGR). Over residues 1468-1478 (LSRELLDEKGP) the composition is skewed to basic and acidic residues. Disordered stretches follow at residues 1601-1623 (TKKD…RELL) and 1679-1733 (KGKG…DRSY). The segment covering 1680-1698 (GKGKKRRGRRSKKERRRGR) has biased composition (basic residues). Over residues 1712-1722 (LSRELLDEKGP) the composition is skewed to basic and acidic residues. Disordered stretches follow at residues 1845–1867 (TKKD…RELL) and 1923–1964 (KGKG…LDEK). The span at 1924-1942 (GKGKKRRGRRSKKERRRGR) shows a compositional bias: basic residues. Disordered stretches follow at residues 2089–2111 (TKKD…RELL) and 2167–2208 (KGKG…LDEK). Positions 2168-2186 (GKGKKRRGRRSKKERRRGR) are enriched in basic residues. 2 disordered regions span residues 2333–2355 (TKKD…RELL) and 2411–2452 (KGKG…LDEK). A compositionally biased stretch (basic residues) spans 2412 to 2430 (GKGKKRRGRRSKKERRRGR). Disordered regions lie at residues 2577–2599 (TKKD…RELL) and 2655–2709 (KGKG…DRSY). Over residues 2656 to 2674 (GKGKKRRGRRSKKERRRGR) the composition is skewed to basic residues. The span at 2688–2698 (LSRELLDEKGP) shows a compositional bias: basic and acidic residues. Disordered stretches follow at residues 2821 to 2843 (TKKD…RELL) and 2899 to 2953 (KGKG…DRSY). Residues 2900-2918 (GKGKKRRGRRSKKERRRGR) are compositionally biased toward basic residues. Basic and acidic residues predominate over residues 2932-2942 (LSRELLDEKGP). 2 disordered regions span residues 3065 to 3087 (TKKD…RELL) and 3143 to 3197 (KGKG…DRSY). The segment covering 3144 to 3162 (GKGKKRRGRRSKKERRRGR) has biased composition (basic residues). The segment covering 3176-3186 (LSRELLDEKGP) has biased composition (basic and acidic residues). Disordered stretches follow at residues 3309-3331 (TKKD…RELL) and 3387-3441 (KGKG…DRSY). Positions 3388–3406 (GKGKKRRGRRSKKERRRGR) are enriched in basic residues. The segment covering 3420 to 3430 (LSRELLDEKGP) has biased composition (basic and acidic residues). 2 disordered regions span residues 3553 to 3575 (TKKD…RELL) and 3631 to 3672 (KGKG…LDEK). Residues 3632–3650 (GKGKKRRGRRSKKERRRGR) are compositionally biased toward basic residues. Disordered stretches follow at residues 3797–3819 (TKKD…RELL) and 3875–3916 (KGKG…LDEK). Basic residues predominate over residues 3876 to 3894 (GKGKKRRGRRSKKERRRGR). Disordered stretches follow at residues 4041–4063 (TKKD…RELL) and 4119–4160 (KGKG…LDEK). The segment covering 4120–4138 (GKGKKRRGRRSKKERRRGR) has biased composition (basic residues). Disordered regions lie at residues 4285–4307 (TKKD…RELL), 4361–4404 (EKKG…LDEK), 4453–4474 (RTKK…LSRE), and 4530–4573 (EKKG…LDEK). Residues 4364-4382 (GKGKKRRGRRSKKERRRGR) are compositionally biased toward basic residues. Positions 4533-4551 (GKGKKRRGRRSKKERRRGR) are enriched in basic residues. 2 disordered regions span residues 4773–4793 (TKKD…LSRE) and 4851–4889 (KGKG…RELL). Residues 4852-4870 (GKGKKRRGRRSKKERRRGR) are compositionally biased toward basic residues. Disordered stretches follow at residues 5017-5037 (TKKD…LSRE) and 5094-5128 (KKGK…CPRL). A compositionally biased stretch (basic residues) spans 5096–5114 (GKGKKRRGRRSKKKRRRGR).

Belongs to the NBPF family.

The protein resides in the cytoplasm. The chain is NBPF family member NBPF20 from Homo sapiens (Human).